The following is a 256-amino-acid chain: H-2 class II histocompatibility antigen, A-D alpha chain (256 aa).

Positions Met-1–Gly-23 are cleaved as a signal peptide. Residues Glu-24–Asn-111 are alpha-1. The Extracellular segment spans residues Glu-24 to Glu-218. The interval Glu-112–Trp-205 is alpha-2. The 93-residue stretch at Pro-114 to Glu-206 folds into the Ig-like C1-type domain. A disulfide bridge links Cys-134 with Cys-190. The N-linked (GlcNAc...) asparagine glycan is linked to Asn-145. The interval Glu-206–Glu-218 is connecting peptide. The chain crosses the membrane as a helical span at residues Thr-219–Leu-244. Residues Arg-245–Leu-256 lie on the Cytoplasmic side of the membrane.

Belongs to the MHC class II family.

The protein localises to the membrane. In Mus musculus (Mouse), this protein is H-2 class II histocompatibility antigen, A-D alpha chain (H2-Aa).